A 305-amino-acid polypeptide reads, in one-letter code: tRNA uridine(34) hydroxylase (305 aa).

Positions 125–219 (ADENTVVVDK…YLEEVPREQS (95 aa)) constitute a Rhodanese domain. The Cysteine persulfide intermediate role is filled by C179.

The protein belongs to the TrhO family.

The catalysed reaction is uridine(34) in tRNA + AH2 + O2 = 5-hydroxyuridine(34) in tRNA + A + H2O. In terms of biological role, catalyzes oxygen-dependent 5-hydroxyuridine (ho5U) modification at position 34 in tRNAs. This is tRNA uridine(34) hydroxylase from Brucella abortus (strain S19).